A 341-amino-acid polypeptide reads, in one-letter code: Coiled-coil domain-containing protein 86 (341 aa).

The segment at 1–341 is disordered; the sequence is MGTPLRRSRR…QPPQRPVAKV (341 aa). At Ser-18 the chain carries Phosphoserine. Basic and acidic residues predominate over residues 26–49; that stretch reads EVSRAKRALVDFKSNPEETRELES. Ser-59 carries the phosphoserine modification. The segment covering 64–73 has biased composition (low complexity); the sequence is PETSPESPCP. Thr-66 bears the Phosphothreonine mark. Phosphoserine is present on residues Ser-67, Ser-70, Ser-81, Ser-92, Ser-103, Ser-114, and Ser-124. The segment covering 105-114 has biased composition (polar residues); the sequence is AGQTESNPES. Residues 130 to 139 show a composition bias toward basic and acidic residues; the sequence is EVAHAKEEVI. A phosphoserine mark is found at Ser-142, Ser-169, Ser-170, and Ser-200. Over residues 219 to 235 the composition is skewed to basic residues; it reads GKPKSGRVWKDRSKKRF. Residues 254 to 298 show a composition bias toward basic and acidic residues; sequence ERQERKLAKDFARHLEEEKQRRRQEKKERRAENLRRRLENERKAE. The stretch at 261-304 forms a coiled coil; it reads AKDFARHLEEEKQRRRQEKKERRAENLRRRLENERKAEIVQVIR. Basic residues predominate over residues 307-317; sequence AKLKKAKKKQL. Arg-323 is subject to Citrulline.

Citrullinated by PADI4.

The protein resides in the nucleus. The protein localises to the chromosome. Its subcellular location is the nucleolus. Its function is as follows. Required for proper chromosome segregation during mitosis and error-free mitotic progression. The chain is Coiled-coil domain-containing protein 86 from Rattus norvegicus (Rat).